We begin with the raw amino-acid sequence, 225 residues long: Germin-like protein 3-1 (225 aa).

The first 22 residues, 1–22 (MRAAVAHRILLSLALFAVLCRC), serve as a signal peptide directing secretion. Cys31 and Cys51 are joined by a disulfide. The region spanning 65–216 (SALSRATNPA…AFKITGQDVQ (152 aa)) is the Cupin type-1 domain. An N-linked (GlcNAc...) asparagine glycan is attached at Asn81. Positions 115, 117, 122, and 161 each coordinate Mn(2+).

This sequence belongs to the germin family. Oligomer (believed to be a pentamer but probably hexamer).

It is found in the secreted. It localises to the extracellular space. Its subcellular location is the apoplast. In terms of biological role, may play a role in plant defense. Probably has no oxalate oxidase activity even if the active site is conserved. This is Germin-like protein 3-1 from Oryza sativa subsp. japonica (Rice).